The following is a 535-amino-acid chain: CTP synthase (535 aa).

The Glutamine amidotransferase type-1 domain occupies 300–535; the sequence is RIGIVGKYAP…LVSASYERSK (236 aa). Residues cysteine 385, histidine 509, and glutamate 511 each act as for GATase activity in the active site.

Belongs to the CTP synthase family.

It catalyses the reaction UTP + L-glutamine + ATP + H2O = CTP + L-glutamate + ADP + phosphate + 2 H(+). Its pathway is pyrimidine metabolism; CTP biosynthesis via de novo pathway; CTP from UDP: step 2/2. In terms of biological role, catalyzes the ATP-dependent amination of UTP to CTP with either L-glutamine or ammonia as the source of nitrogen. This chain is CTP synthase, found in Encephalitozoon cuniculi (strain GB-M1) (Microsporidian parasite).